The chain runs to 546 residues: Chaperonin GroEL 2 (546 aa).

ATP contacts are provided by residues 30–33 (TLGP), lysine 51, 87–91 (DGTTT), glycine 415, 479–481 (NAA), and aspartate 495. The disordered stretch occupies residues 524–546 (APKDAPPAAPAGVPGAGGPGFDF). The segment covering 537 to 546 (PGAGGPGFDF) has biased composition (gly residues).

The protein belongs to the chaperonin (HSP60) family. As to quaternary structure, forms a cylinder of 14 subunits composed of two heptameric rings stacked back-to-back. Interacts with the co-chaperonin GroES.

Its subcellular location is the cytoplasm. The enzyme catalyses ATP + H2O + a folded polypeptide = ADP + phosphate + an unfolded polypeptide.. Together with its co-chaperonin GroES, plays an essential role in assisting protein folding. The GroEL-GroES system forms a nano-cage that allows encapsulation of the non-native substrate proteins and provides a physical environment optimized to promote and accelerate protein folding. This is Chaperonin GroEL 2 from Burkholderia pseudomallei (strain 1710b).